Here is a 303-residue protein sequence, read N- to C-terminus: Proline dehydrogenase 2 (303 aa).

A substrate-binding site is contributed by Lys-96. The active site involves Asp-130. Residues Met-131 and Gln-159 each coordinate FAD. The active site involves Arg-180. Residues 183-185 and 222-223 each bind FAD; these read KGA and TH. 284–285 serves as a coordination point for substrate; sequence RR.

Belongs to the proline dehydrogenase family. Requires FAD as cofactor.

The enzyme catalyses L-proline + a quinone = (S)-1-pyrroline-5-carboxylate + a quinol + H(+). The protein operates within amino-acid degradation; L-proline degradation into L-glutamate; L-glutamate from L-proline: step 1/2. Functionally, converts proline to delta-1-pyrroline-5-carboxylate. Important for the use of proline as a sole carbon and energy source or a sole nitrogen source. The sequence is that of Proline dehydrogenase 2 from Bacillus subtilis (strain 168).